The primary structure comprises 248 residues: tRNA uridine(34) hydroxylase (248 aa).

The Rhodanese domain maps to 127 to 221 (RGRPLVLLDT…YFEEVGGEGY (95 aa)). Cysteine 181 functions as the Cysteine persulfide intermediate in the catalytic mechanism.

The protein belongs to the TrhO family.

The catalysed reaction is uridine(34) in tRNA + AH2 + O2 = 5-hydroxyuridine(34) in tRNA + A + H2O. In terms of biological role, catalyzes oxygen-dependent 5-hydroxyuridine (ho5U) modification at position 34 in tRNAs. The chain is tRNA uridine(34) hydroxylase from Xanthomonas axonopodis pv. citri (strain 306).